A 255-amino-acid chain; its full sequence is Glycine-rich protein DOT1 (255 aa).

The first 21 residues, 1–21 (MANHKNLFFLCFLIGLGLCSA), serve as a signal peptide directing secretion. The tract at residues 63–88 (GGGSGEGGGAGGHGEGHIGGGGGGGH) is disordered.

As to expression, expressed in emerging leaf primordia and young leaves.

The protein resides in the secreted. Its function is as follows. Involved in leaf vasculature patterning. In Arabidopsis thaliana (Mouse-ear cress), this protein is Glycine-rich protein DOT1.